We begin with the raw amino-acid sequence, 212 residues long: Ras-related protein Rab-15 (212 aa).

Residues Ser-17, Gly-18, Val-19, Gly-20, Lys-21, Thr-22, Cys-23, Ser-35, Ser-39, and Thr-40 each coordinate GTP. Thr-22 serves as a coordination point for Mg(2+). Short sequence motifs (switch) lie at residues 31-45 (NEFH…GVDF) and 63-80 (DTAG…YYRR). 2 residues coordinate Mg(2+): Thr-40 and Asp-63. GTP is bound by residues Gly-66, Asn-121, Lys-122, Asp-124, Ser-151, and Ala-152. A disordered region spans residues 193–212 (LEEEEGKPEGPANSSKTCWC). 2 S-geranylgeranyl cysteine lipidation sites follow: Cys-210 and Cys-212. Residue Cys-212 is modified to Cysteine methyl ester.

It belongs to the small GTPase superfamily. Rab family. As to quaternary structure, the GTP bound form of RAB15 interacts with REP15. Interacts (GTP-bound form) with MICAL1, MICAL3, MICALCL, EHBP1 and EHBP1L1. The cofactor is Mg(2+).

It is found in the cell membrane. The catalysed reaction is GTP + H2O = GDP + phosphate + H(+). Its activity is regulated as follows. Regulated by guanine nucleotide exchange factors (GEFs) which promote the exchange of bound GDP for free GTP. Regulated by GTPase activating proteins (GAPs) which increase the GTP hydrolysis activity. Inhibited by GDP dissociation inhibitors (GDIs). In terms of biological role, the small GTPases Rab are key regulators of intracellular membrane trafficking, from the formation of transport vesicles to their fusion with membranes. Rabs cycle between an inactive GDP-bound form and an active GTP-bound form that is able to recruit to membranes different sets of downstream effectors directly responsible for vesicle formation, movement, tethering and fusion. RAB15 may act in concert with RAB3A in regulating aspects of synaptic vesicle membrane flow within the nerve terminal. The polypeptide is Ras-related protein Rab-15 (Homo sapiens (Human)).